Here is a 219-residue protein sequence, read N- to C-terminus: Ribose-5-phosphate isomerase A (219 aa).

Substrate-binding positions include 28 to 31 (SGST), 81 to 84 (DGAD), and 94 to 97 (KGGG). The active-site Proton acceptor is glutamate 103. Residue lysine 121 coordinates substrate.

Belongs to the ribose 5-phosphate isomerase family. As to quaternary structure, homodimer.

It catalyses the reaction aldehydo-D-ribose 5-phosphate = D-ribulose 5-phosphate. The protein operates within carbohydrate degradation; pentose phosphate pathway; D-ribose 5-phosphate from D-ribulose 5-phosphate (non-oxidative stage): step 1/1. Catalyzes the reversible conversion of ribose-5-phosphate to ribulose 5-phosphate. The sequence is that of Ribose-5-phosphate isomerase A from Haemophilus influenzae (strain PittEE).